A 151-amino-acid chain; its full sequence is uncharacterized protein (151 aa).

This is an uncharacterized protein from Escherichia coli.